A 345-amino-acid polypeptide reads, in one-letter code: KH domain-containing, RNA-binding, signal transduction-associated protein 2 (345 aa).

A KH domain is found at 65–131 (LIPVKQYPKF…AKHAHLSDEL (67 aa)). Disordered stretches follow at residues 178-224 (LNGS…TRGA) and 321-345 (SRSTLKAPLQRPARAGYREHPYGRY). Basic and acidic residues predominate over residues 336–345 (GYREHPYGRY).

This sequence belongs to the KHDRBS family.

The protein localises to the nucleus. In terms of biological role, RNA-binding protein that plays a role in the regulation of alternative splicing. The protein is KH domain-containing, RNA-binding, signal transduction-associated protein 2 (khdrbs2) of Xenopus tropicalis (Western clawed frog).